Here is a 306-residue protein sequence, read N- to C-terminus: N-acetylmuramic acid 6-phosphate etherase (306 aa).

The region spanning 59 to 222 is the SIS domain; it reads ISEALRQGGR…STGAMVQLGK (164 aa). Glu87 serves as the catalytic Proton donor. Residue Glu118 is part of the active site.

The protein belongs to the GCKR-like family. MurNAc-6-P etherase subfamily. As to quaternary structure, homodimer.

It carries out the reaction N-acetyl-D-muramate 6-phosphate + H2O = N-acetyl-D-glucosamine 6-phosphate + (R)-lactate. It functions in the pathway amino-sugar metabolism; N-acetylmuramate degradation. Specifically catalyzes the cleavage of the D-lactyl ether substituent of MurNAc 6-phosphate, producing GlcNAc 6-phosphate and D-lactate. This is N-acetylmuramic acid 6-phosphate etherase from Gloeothece citriformis (strain PCC 7424) (Cyanothece sp. (strain PCC 7424)).